Here is a 418-residue protein sequence, read N- to C-terminus: Beta-arrestin-1 (418 aa).

The segment at 1 to 163 (MGDKGTRVFK…LEEKIHKRNS (163 aa)) is interaction with SRC. Positions 45–86 (PEYLKERRVYVTLTCAFRYGREDLDVLGLTFRKDLFVANVQS) are interaction with CHRM2. Phosphotyrosine is present on Y47. Residues K250, M255, K324, and K326 each contribute to the 1D-myo-inositol hexakisphosphate site. Residues 318–418 (IVSYKVKVKL…GTGSPHLNNR (101 aa)) are interaction with TRAF6. Disordered regions lie at residues 353–374 (HPKPKEEPPHREVPESETPVDT) and 397–418 (KGMKDDKDEEDDGTGSPHLNNR). Basic and acidic residues predominate over residues 355-366 (KPKEEPPHREVP). Position 412 is a phosphoserine (S412). Phosphoserine; by GRK5 is present on S412.

It belongs to the arrestin family. Monomer. Homodimer. Homooligomer; the self-association is mediated by InsP6-binding. Heterooligomer with ARRB2; the association is mediated by InsP6-binding. Interacts with ADRB2 (phosphorylated). Interacts with CHRM2 (phosphorylated). Interacts with LHCGR. Interacts with CYTH2 and CASR. Interacts with AP2B1 (dephosphorylated at 'Tyr-737'); phosphorylation of AP2B1 at 'Tyr-737' disrupts the interaction. Interacts (dephosphorylated at Ser-412) with CLTC. Interacts with CCR2 and GRK2. Interacts with CRR5. Interacts with PTAFR (phosphorylated on serine residues). Interacts with CLTC and MAP2K3. Interacts with CREB1. Interacts with TRAF6. Interacts with IGF1R and MDM2. Interacts with C5AR1. Interacts with PDE4D. Interacts with SRC (via the SH3 domain and the protein kinase domain); the interaction is independent of the phosphorylation state of SRC C-terminus. Interacts with TACR1. Interacts with RAF1. Interacts with CHUK, IKBKB and MAP3K14. Interacts with DVL1; the interaction is enhanced by phosphorylation of DVL1. Interacts with DVL2; the interaction is enhanced by phosphorylation of DVL2. Interacts with IGF1R. Associates with MAP kinase p38. Part of a MAPK signaling complex consisting of TACR1, ARRB1, SRC, MAPK1 (activated) and MAPK3 (activated). Part of a MAPK signaling complex consisting of F2RL1, ARRB1, RAF1, MAPK1 (activated) and MAPK3 (activated). Interacts with GPR143. Interacts with MAP2K4/MKK4. Interacts with HCK and CXCR1 (phosphorylated). Interacts with ACKR3 and ACKR4. Interacts with ARRDC1; the interaction is direct. Interacts with GPR61, GPR62 and GPR135. Constitutively phosphorylated at Ser-412 in the cytoplasm. At the plasma membrane, is rapidly dephosphorylated, a process that is required for clathrin binding and beta-2 adrenergic receptor/ADRB2 endocytosis but not for ADRB2 binding and desensitization. Once internalized, is rephosphorylated. Post-translationally, the ubiquitination status appears to regulate the formation and trafficking of beta-arrestin-GPCR complexes and signaling. Ubiquitination appears to occur GPCR-specific. Ubiquitinated by MDM2; the ubiquitination is required for rapid internalization of ADRB2. Deubiquitinated by USP33; the deubiquitination leads to a dissociation of the beta-arrestin-GPCR complex. Stimulation of a class A GPCR, such as ADRB2, induces transient ubiquitination and subsequently promotes association with USP33. Predominantly localized in neuronal tissues and in the spleen.

It is found in the cytoplasm. The protein localises to the nucleus. Its subcellular location is the cell membrane. It localises to the membrane. The protein resides in the clathrin-coated pit. It is found in the cell projection. The protein localises to the pseudopodium. Its subcellular location is the cytoplasmic vesicle. Its function is as follows. Functions in regulating agonist-mediated G-protein coupled receptor (GPCR) signaling by mediating both receptor desensitization and resensitization processes. During homologous desensitization, beta-arrestins bind to the GPRK-phosphorylated receptor and sterically preclude its coupling to the cognate G-protein; the binding appears to require additional receptor determinants exposed only in the active receptor conformation. The beta-arrestins target many receptors for internalization by acting as endocytic adapters (CLASPs, clathrin-associated sorting proteins) and recruiting the GPRCs to the adapter protein 2 complex 2 (AP-2) in clathrin-coated pits (CCPs). However, the extent of beta-arrestin involvement appears to vary significantly depending on the receptor, agonist and cell type. Internalized arrestin-receptor complexes traffic to intracellular endosomes, where they remain uncoupled from G-proteins. Two different modes of arrestin-mediated internalization occur. Class A receptors, like ADRB2, OPRM1, ENDRA, D1AR and ADRA1B dissociate from beta-arrestin at or near the plasma membrane and undergo rapid recycling. Class B receptors, like AVPR2, AGTR1, NTSR1, TRHR and TACR1 internalize as a complex with arrestin and traffic with it to endosomal vesicles, presumably as desensitized receptors, for extended periods of time. Receptor resensitization then requires that receptor-bound arrestin is removed so that the receptor can be dephosphorylated and returned to the plasma membrane. Involved in internalization of P2RY4 and UTP-stimulated internalization of P2RY2. Involved in phosphorylation-dependent internalization of OPRD1 ands subsequent recycling. Involved in the degradation of cAMP by recruiting cAMP phosphodiesterases to ligand-activated receptors. Beta-arrestins function as multivalent adapter proteins that can switch the GPCR from a G-protein signaling mode that transmits short-lived signals from the plasma membrane via small molecule second messengers and ion channels to a beta-arrestin signaling mode that transmits a distinct set of signals that are initiated as the receptor internalizes and transits the intracellular compartment. Acts as a signaling scaffold for MAPK pathways such as MAPK1/3 (ERK1/2). ERK1/2 activated by the beta-arrestin scaffold is largely excluded from the nucleus and confined to cytoplasmic locations such as endocytic vesicles, also called beta-arrestin signalosomes. Recruits c-Src/SRC to ADRB2 resulting in ERK activation. GPCRs for which the beta-arrestin-mediated signaling relies on both ARRB1 and ARRB2 (codependent regulation) include ADRB2, F2RL1 and PTH1R. For some GPCRs the beta-arrestin-mediated signaling relies on either ARRB1 or ARRB2 and is inhibited by the other respective beta-arrestin form (reciprocal regulation). Inhibits ERK1/2 signaling in AGTR1- and AVPR2-mediated activation (reciprocal regulation). Is required for SP-stimulated endocytosis of NK1R and recruits c-Src/SRC to internalized NK1R resulting in ERK1/2 activation, which is required for the antiapoptotic effects of SP. Is involved in proteinase-activated F2RL1-mediated ERK activity. Acts as a signaling scaffold for the AKT1 pathway. Is involved in alpha-thrombin-stimulated AKT1 signaling. Is involved in IGF1-stimulated AKT1 signaling leading to increased protection from apoptosis. Involved in activation of the p38 MAPK signaling pathway and in actin bundle formation. Involved in F2RL1-mediated cytoskeletal rearrangement and chemotaxis. Involved in AGTR1-mediated stress fiber formation by acting together with GNAQ to activate RHOA. Appears to function as signaling scaffold involved in regulation of MIP-1-beta-stimulated CCR5-dependent chemotaxis. Involved in attenuation of NF-kappa-B-dependent transcription in response to GPCR or cytokine stimulation by interacting with and stabilizing CHUK. May serve as nuclear messenger for GPCRs. Involved in OPRD1-stimulated transcriptional regulation by translocating to CDKN1B and FOS promoter regions and recruiting EP300 resulting in acetylation of histone H4. Involved in regulation of LEF1 transcriptional activity via interaction with DVL1 and/or DVL2 Also involved in regulation of receptors other than GPCRs. Involved in Toll-like receptor and IL-1 receptor signaling through the interaction with TRAF6 which prevents TRAF6 autoubiquitination and oligomerization required for activation of NF-kappa-B and JUN. Binds phosphoinositides. Binds inositolhexakisphosphate (InsP6). Involved in IL8-mediated granule release in neutrophils. Required for atypical chemokine receptor ACKR2-induced RAC1-LIMK1-PAK1-dependent phosphorylation of cofilin (CFL1) and for the up-regulation of ACKR2 from endosomal compartment to cell membrane, increasing its efficiency in chemokine uptake and degradation. Involved in the internalization of the atypical chemokine receptor ACKR3. Negatively regulates the NOTCH signaling pathway by mediating the ubiquitination and degradation of NOTCH1 by ITCH. Participates in the recruitment of the ubiquitin-protein ligase to the receptor. The polypeptide is Beta-arrestin-1 (Rattus norvegicus (Rat)).